Reading from the N-terminus, the 361-residue chain is Beta-hexosaminidase (361 aa).

Substrate-binding positions include Asp69, Arg77, Arg144, and 174 to 175 (KH). His187 (proton donor/acceptor) is an active-site residue. Asp258 functions as the Nucleophile in the catalytic mechanism.

It belongs to the glycosyl hydrolase 3 family. NagZ subfamily.

The protein localises to the cytoplasm. The catalysed reaction is Hydrolysis of terminal non-reducing N-acetyl-D-hexosamine residues in N-acetyl-beta-D-hexosaminides.. It functions in the pathway cell wall biogenesis; peptidoglycan recycling. Its function is as follows. Plays a role in peptidoglycan recycling by cleaving the terminal beta-1,4-linked N-acetylglucosamine (GlcNAc) from peptide-linked peptidoglycan fragments, giving rise to free GlcNAc, anhydro-N-acetylmuramic acid and anhydro-N-acetylmuramic acid-linked peptides. The chain is Beta-hexosaminidase from Neisseria meningitidis serogroup A / serotype 4A (strain DSM 15465 / Z2491).